The primary structure comprises 472 residues: Ribosomal protein uS12 methylthiotransferase RimO (472 aa).

In terms of domain architecture, MTTase N-terminal spans 33–143 (NRIGFVSLGC…VLKHVHKYVP (111 aa)). Cys-42, Cys-78, Cys-107, Cys-175, Cys-179, and Cys-182 together coordinate [4Fe-4S] cluster. Residues 161 to 398 (LTPKHYAYLK…MEVQAEISAE (238 aa)) form the Radical SAM core domain. A TRAM domain is found at 401-467 (ARFVGRTLDI…EHDLWAEVVD (67 aa)).

Belongs to the methylthiotransferase family. RimO subfamily. [4Fe-4S] cluster serves as cofactor.

The protein resides in the cytoplasm. It catalyses the reaction L-aspartate(89)-[ribosomal protein uS12]-hydrogen + (sulfur carrier)-SH + AH2 + 2 S-adenosyl-L-methionine = 3-methylsulfanyl-L-aspartate(89)-[ribosomal protein uS12]-hydrogen + (sulfur carrier)-H + 5'-deoxyadenosine + L-methionine + A + S-adenosyl-L-homocysteine + 2 H(+). Functionally, catalyzes the methylthiolation of an aspartic acid residue of ribosomal protein uS12. This Shewanella baltica (strain OS155 / ATCC BAA-1091) protein is Ribosomal protein uS12 methylthiotransferase RimO.